Here is an 860-residue protein sequence, read N- to C-terminus: Linoleate 9S-lipoxygenase A (860 aa).

The region spanning 29-159 (NALDFTDLAG…RYKSDRIFFA (131 aa)) is the PLAT domain. The Lipoxygenase domain maps to 162 to 860 (PYLPSETPEL…GKGIPNSVSI (699 aa)). The segment at 209 to 246 (PDQGKENVRTTLGGSADYPYPRRGRTGRPPTRTDPKSE) is disordered. Residues H521, H526, H712, N716, and I860 each contribute to the Fe cation site.

The protein belongs to the lipoxygenase family. In terms of assembly, monomer. Fe cation is required as a cofactor. In terms of tissue distribution, expressed in germinating seeds as well as in ripening fruit.

Its subcellular location is the cytoplasm. It catalyses the reaction (9Z,12Z)-octadecadienoate + O2 = (9S)-hydroperoxy-(10E,12Z)-octadecadienoate. Its pathway is lipid metabolism; oxylipin biosynthesis. Plant lipoxygenase may be involved in a number of diverse aspects of plant physiology including growth and development, pest resistance, and senescence or responses to wounding. It catalyzes the hydroperoxidation of lipids containing a cis,cis-1,4-pentadiene structure. The chain is Linoleate 9S-lipoxygenase A (LOX1.1) from Solanum lycopersicum (Tomato).